The chain runs to 399 residues: Methylthioribose kinase (399 aa).

Residues asparagine 40, lysine 57, and 111–113 (EDL) each bind ATP. Aspartate 229 is a binding site for substrate. 246 to 248 (DAE) lines the ATP pocket. Arginine 344 contacts substrate.

The protein belongs to the methylthioribose kinase family. In terms of assembly, homodimer.

It catalyses the reaction 5-(methylsulfanyl)-D-ribose + ATP = 5-(methylsulfanyl)-alpha-D-ribose 1-phosphate + ADP + H(+). Its pathway is amino-acid biosynthesis; L-methionine biosynthesis via salvage pathway; S-methyl-5-thio-alpha-D-ribose 1-phosphate from S-methyl-5'-thioadenosine (hydrolase route): step 2/2. Catalyzes the phosphorylation of methylthioribose into methylthioribose-1-phosphate. This chain is Methylthioribose kinase, found in Cronobacter sakazakii (strain ATCC BAA-894) (Enterobacter sakazakii).